Here is a 153-residue protein sequence, read N- to C-terminus: MKCPFCGHLEDRVIDSRAGGAGEVIRRRRECASCERRFTTYERVEDILPTVVKKDGRRESFDRQKLVRGLRIACNKRPVSTDQIEAIADAIEREAQESERREILSTELGERVMNHLRTLDEVAYVRFASVYRSFRDIDQFMVELGKLVKAKAP.

Residues C3 to C34 fold into a zinc finger. Residues P49–Q139 enclose the ATP-cone domain.

Belongs to the NrdR family. The cofactor is Zn(2+).

Negatively regulates transcription of bacterial ribonucleotide reductase nrd genes and operons by binding to NrdR-boxes. The sequence is that of Transcriptional repressor NrdR from Sorangium cellulosum (strain So ce56) (Polyangium cellulosum (strain So ce56)).